The chain runs to 128 residues: Small ribosomal subunit protein uS12 (128 aa).

Residue D89 is modified to 3-methylthioaspartic acid.

It belongs to the universal ribosomal protein uS12 family. In terms of assembly, part of the 30S ribosomal subunit. Contacts proteins S8 and S17. May interact with IF1 in the 30S initiation complex.

In terms of biological role, with S4 and S5 plays an important role in translational accuracy. Its function is as follows. Interacts with and stabilizes bases of the 16S rRNA that are involved in tRNA selection in the A site and with the mRNA backbone. Located at the interface of the 30S and 50S subunits, it traverses the body of the 30S subunit contacting proteins on the other side and probably holding the rRNA structure together. The combined cluster of proteins S8, S12 and S17 appears to hold together the shoulder and platform of the 30S subunit. This chain is Small ribosomal subunit protein uS12, found in Campylobacter jejuni subsp. doylei (strain ATCC BAA-1458 / RM4099 / 269.97).